We begin with the raw amino-acid sequence, 399 residues long: Transferrin receptor subunit ESAG6 (399 aa).

An N-terminal signal peptide occupies residues 1-17; it reads MRFWFVLLALLGKEIYA. Asn26 and Asn110 each carry an N-linked (GlcNAc...) asparagine glycan. 3 disulfides stabilise this stretch: Cys34–Cys161, Cys84–Cys312, and Cys144–Cys215. N-linked (GlcNAc...) asparagine glycosylation is found at Asn235, Asn250, and Asn360. Residue Asn376 is the site of GPI-anchor amidated asparagine attachment. Positions 377 to 399 are cleaved as a propeptide — removed in mature form; that stretch reads AAAIHLSVSTAALCRSALLLGVL.

In terms of assembly, heterodimer composed of ESAG6 and ESAG7. N-glycosylated. Glycosylation is dispensable for heterodimer formation and host transferrin binding.

Its subcellular location is the cell membrane. The protein localises to the flagellar pocket. Functionally, transferrin receptor subunit involved in receptor-mediated acquisition of iron from the environment by binding host TF/transferrin. The sequence is that of Transferrin receptor subunit ESAG6 from Trypanosoma brucei brucei.